The sequence spans 436 residues: GTPase Der (436 aa).

EngA-type G domains follow at residues 4–167 and 176–351; these read PVVA…PKDH and IKFC…DNHA. GTP contacts are provided by residues 10 to 17, 57 to 61, 119 to 122, 182 to 189, 229 to 233, and 294 to 297; these read GRPNVGKS, DTGGI, NKID, DTAGM, and NKWD. One can recognise a KH-like domain in the interval 352–436; it reads MRVQTNVLNE…PIKIIARPRK (85 aa).

It belongs to the TRAFAC class TrmE-Era-EngA-EngB-Septin-like GTPase superfamily. EngA (Der) GTPase family. Associates with the 50S ribosomal subunit.

Functionally, GTPase that plays an essential role in the late steps of ribosome biogenesis. The sequence is that of GTPase Der from Geobacillus thermodenitrificans (strain NG80-2).